The following is a 79-amino-acid chain: Small ribosomal subunit protein bS18 (79 aa).

It belongs to the bacterial ribosomal protein bS18 family. In terms of assembly, part of the 30S ribosomal subunit. Forms a tight heterodimer with protein bS6.

In terms of biological role, binds as a heterodimer with protein bS6 to the central domain of the 16S rRNA, where it helps stabilize the platform of the 30S subunit. The sequence is that of Small ribosomal subunit protein bS18 from Bacillus pumilus (strain SAFR-032).